The following is a 276-amino-acid chain: Probable endonuclease 4 (276 aa).

9 residues coordinate Zn(2+): His-70, His-108, Glu-143, Asp-176, His-179, His-210, Asp-223, His-225, and Glu-255.

Belongs to the AP endonuclease 2 family. It depends on Zn(2+) as a cofactor.

The enzyme catalyses Endonucleolytic cleavage to 5'-phosphooligonucleotide end-products.. Endonuclease IV plays a role in DNA repair. It cleaves phosphodiester bonds at apurinic or apyrimidinic (AP) sites, generating a 3'-hydroxyl group and a 5'-terminal sugar phosphate. The chain is Probable endonuclease 4 from Mesomycoplasma hyopneumoniae (strain 7448) (Mycoplasma hyopneumoniae).